A 426-amino-acid polypeptide reads, in one-letter code: Serine--tRNA ligase (426 aa).

235-237 (TAE) is a binding site for L-serine. ATP-binding positions include 266-268 (RRE) and Val-282. Glu-289 is a binding site for L-serine. 353–356 (EASS) is a binding site for ATP. Ser-389 lines the L-serine pocket.

This sequence belongs to the class-II aminoacyl-tRNA synthetase family. Type-1 seryl-tRNA synthetase subfamily. As to quaternary structure, homodimer. The tRNA molecule binds across the dimer.

The protein resides in the cytoplasm. The catalysed reaction is tRNA(Ser) + L-serine + ATP = L-seryl-tRNA(Ser) + AMP + diphosphate + H(+). It carries out the reaction tRNA(Sec) + L-serine + ATP = L-seryl-tRNA(Sec) + AMP + diphosphate + H(+). It functions in the pathway aminoacyl-tRNA biosynthesis; selenocysteinyl-tRNA(Sec) biosynthesis; L-seryl-tRNA(Sec) from L-serine and tRNA(Sec): step 1/1. In terms of biological role, catalyzes the attachment of serine to tRNA(Ser). Is also able to aminoacylate tRNA(Sec) with serine, to form the misacylated tRNA L-seryl-tRNA(Sec), which will be further converted into selenocysteinyl-tRNA(Sec). The chain is Serine--tRNA ligase from Chlorobium chlorochromatii (strain CaD3).